Consider the following 212-residue polypeptide: Ribonuclease HII (212 aa).

The RNase H type-2 domain occupies 4–206 (EVQCGIDEAG…YKKIKEDVES (203 aa)). The a divalent metal cation site is built by Asp10, Glu11, and Asp103.

The protein belongs to the RNase HII family. It depends on Mn(2+) as a cofactor. Mg(2+) is required as a cofactor.

It localises to the cytoplasm. The catalysed reaction is Endonucleolytic cleavage to 5'-phosphomonoester.. In terms of biological role, endonuclease that specifically degrades the RNA of RNA-DNA hybrids. In Thermoplasma volcanium (strain ATCC 51530 / DSM 4299 / JCM 9571 / NBRC 15438 / GSS1), this protein is Ribonuclease HII.